The following is a 568-amino-acid chain: Phosphoribosylaminoimidazole carboxylase (568 aa).

The 189-residue stretch at 110-298 folds into the ATP-grasp domain; the sequence is KNHLIKHDVA…QFEAHVRAVT (189 aa). 138–193 contributes to the ATP binding site; the sequence is GEKFGYPYMLKSRTLAYDGRGNFVVKDKSYCEKALEFLKDRPLYAEKWCPFTKELA.

This sequence in the C-terminal section; belongs to the AIR carboxylase family. Class I subfamily.

The enzyme catalyses 5-amino-1-(5-phospho-D-ribosyl)imidazole-4-carboxylate + H(+) = 5-amino-1-(5-phospho-beta-D-ribosyl)imidazole + CO2. Its pathway is purine metabolism; IMP biosynthesis via de novo pathway; 5-amino-1-(5-phospho-D-ribosyl)imidazole-4-carboxylate from 5-amino-1-(5-phospho-D-ribosyl)imidazole (carboxylase route): step 1/1. The chain is Phosphoribosylaminoimidazole carboxylase (ADE2) from Candida albicans (strain SC5314 / ATCC MYA-2876) (Yeast).